The sequence spans 413 residues: Probable alpha-tubulin polyglutamylase Ttll1 (413 aa).

The TTL domain maps to A2 to T370. ATP is bound by residues S184–I187, K197, and D199.

The protein belongs to the tubulin polyglutamylase family.

It localises to the cytoplasm. Its subcellular location is the cytoskeleton. The protein localises to the cilium basal body. The protein resides in the contractile vacuole. Its function is as follows. Probable tubulin polyglutamylase with a strong preference for alpha-tubulin. Modifies alpha-tubulin, generating side chains of glutamate on the gamma-carboxyl groups of specific glutamate residues within the C-terminal tail of alpha-tubulin. This is Probable alpha-tubulin polyglutamylase Ttll1 (Ttll1) from Tetrahymena thermophila (strain SB210).